The chain runs to 455 residues: Ribulose bisphosphate carboxylase large chain (455 aa).

N6,N6,N6-trimethyllysine is present on lysine 5. Substrate contacts are provided by asparagine 114 and threonine 164. The Proton acceptor role is filled by lysine 166. Position 168 (lysine 168) interacts with substrate. Residues lysine 192, aspartate 194, and glutamate 195 each contribute to the Mg(2+) site. Lysine 192 is modified (N6-carboxylysine). Histidine 285 serves as the catalytic Proton acceptor. Substrate contacts are provided by arginine 286, histidine 318, and serine 370.

This sequence belongs to the RuBisCO large chain family. Type I subfamily. As to quaternary structure, heterohexadecamer of 8 large chains and 8 small chains; disulfide-linked. The disulfide link is formed within the large subunit homodimers. Requires Mg(2+) as cofactor. In terms of processing, the disulfide bond which can form in the large chain dimeric partners within the hexadecamer appears to be associated with oxidative stress and protein turnover.

Its subcellular location is the plastid. It localises to the chloroplast. The catalysed reaction is 2 (2R)-3-phosphoglycerate + 2 H(+) = D-ribulose 1,5-bisphosphate + CO2 + H2O. It catalyses the reaction D-ribulose 1,5-bisphosphate + O2 = 2-phosphoglycolate + (2R)-3-phosphoglycerate + 2 H(+). Functionally, ruBisCO catalyzes two reactions: the carboxylation of D-ribulose 1,5-bisphosphate, the primary event in carbon dioxide fixation, as well as the oxidative fragmentation of the pentose substrate in the photorespiration process. Both reactions occur simultaneously and in competition at the same active site. The polypeptide is Ribulose bisphosphate carboxylase large chain (Lupinus digitatus (Lupine)).